The primary structure comprises 340 residues: Fructose-1,6-bisphosphatase class 1 (340 aa).

4 residues coordinate Mg(2+): Glu107, Asp126, Leu128, and Asp129. Asn215 provides a ligand contact to substrate. Position 287 (Glu287) interacts with Mg(2+).

This sequence belongs to the FBPase class 1 family. In terms of assembly, homotetramer. Requires Mg(2+) as cofactor.

The protein localises to the cytoplasm. The catalysed reaction is beta-D-fructose 1,6-bisphosphate + H2O = beta-D-fructose 6-phosphate + phosphate. Its pathway is carbohydrate biosynthesis; gluconeogenesis. The polypeptide is Fructose-1,6-bisphosphatase class 1 (Brucella suis (strain ATCC 23445 / NCTC 10510)).